A 328-amino-acid polypeptide reads, in one-letter code: Cell division protein ZipA (328 aa).

Over 1-4 the chain is Periplasmic; sequence MDLN. Residues 5–25 traverse the membrane as a helical segment; sequence TILIIVGIVALVALIVHGLWS. Topologically, residues 26-328 are cytoplasmic; that stretch reads NRREKSKYFD…NAEQAYLARV (303 aa). Positions 43 to 82 are disordered; the sequence is TSLTSRSHTQEEMAQPNNISPNTYVENGHTPIPQPTTEKV. Residues 57–67 are compositionally biased toward polar residues; sequence QPNNISPNTYV.

The protein belongs to the ZipA family. Interacts with FtsZ via their C-terminal domains.

It is found in the cell inner membrane. In terms of biological role, essential cell division protein that stabilizes the FtsZ protofilaments by cross-linking them and that serves as a cytoplasmic membrane anchor for the Z ring. Also required for the recruitment to the septal ring of downstream cell division proteins. This Haemophilus influenzae (strain PittEE) protein is Cell division protein ZipA.